A 197-amino-acid polypeptide reads, in one-letter code: Probable chorismate pyruvate-lyase (197 aa).

Positions 1 to 14 are enriched in basic and acidic residues; the sequence is MRFDAADAHWRETP. Residues 1-25 form a disordered region; the sequence is MRFDAADAHWRETPRPGASGAQKDW. Residues Arg73, Leu111, and Glu173 each coordinate substrate.

The protein belongs to the UbiC family.

The protein resides in the cytoplasm. It carries out the reaction chorismate = 4-hydroxybenzoate + pyruvate. It functions in the pathway cofactor biosynthesis; ubiquinone biosynthesis. Functionally, removes the pyruvyl group from chorismate, with concomitant aromatization of the ring, to provide 4-hydroxybenzoate (4HB) for the ubiquinone pathway. The polypeptide is Probable chorismate pyruvate-lyase (Burkholderia thailandensis (strain ATCC 700388 / DSM 13276 / CCUG 48851 / CIP 106301 / E264)).